We begin with the raw amino-acid sequence, 297 residues long: uncharacterized protein (297 aa).

Residue glutamate 46 is part of the active site.

It belongs to the PhzF family. In terms of assembly, homodimer and homotetramer.

This is an uncharacterized protein from Escherichia coli (strain K12).